Here is a 339-residue protein sequence, read N- to C-terminus: Probable E3 ubiquitin-protein ligase BAH1-like 1 (339 aa).

In terms of domain architecture, SPX spans 1-163 (MKFGAIYEEY…GSVSGRDFKS (163 aa)). The RING-type zinc finger occupies 235–284 (CPICLDTLFNPYALSCGHLFCKGCACGAASVYIFQGVKSAPPEAKCPVCR).

It belongs to the RING-type zinc finger family.

It catalyses the reaction S-ubiquitinyl-[E2 ubiquitin-conjugating enzyme]-L-cysteine + [acceptor protein]-L-lysine = [E2 ubiquitin-conjugating enzyme]-L-cysteine + N(6)-ubiquitinyl-[acceptor protein]-L-lysine.. It functions in the pathway protein modification; protein ubiquitination. This Oryza sativa subsp. indica (Rice) protein is Probable E3 ubiquitin-protein ligase BAH1-like 1.